Reading from the N-terminus, the 182-residue chain is Ferritin heavy chain (182 aa).

The residue at position 1 (Met1) is an N-acetylmethionine. Thr2 is modified (N-acetylthreonine; in Ferritin heavy chain, N-terminally processed). A Ferritin-like diiron domain is found at 11–160 (QNYHQDSEAA…DHVTNLRRMG (150 aa)). Fe cation contacts are provided by Glu28, Glu63, His66, Glu108, and Gln142.

The protein belongs to the ferritin family. As to quaternary structure, oligomer of 24 subunits. There are two types of subunits: L (light) chain and H (heavy) chain. The major chain can be light or heavy, depending on the species and tissue type. The functional molecule forms a roughly spherical shell with a diameter of 12 nm and contains a central cavity into which the insoluble mineral iron core is deposited. Interacts with NCOA4; NCOA4 promotes targeting of the iron-binding ferritin complex to autolysosomes following starvation or iron depletion.

The protein localises to the cytoplasm. The protein resides in the lysosome. It localises to the cytoplasmic vesicle. Its subcellular location is the autophagosome. It catalyses the reaction 4 Fe(2+) + O2 + 4 H(+) = 4 Fe(3+) + 2 H2O. Functionally, stores iron in a soluble, non-toxic, readily available form. Important for iron homeostasis. Has ferroxidase activity. Iron is taken up in the ferrous form and deposited as ferric hydroxides after oxidation. Also plays a role in delivery of iron to cells. Mediates iron uptake in capsule cells of the developing kidney. Delivery to lysosomes is mediated by the cargo receptor NCOA4 for autophagic degradation and release of iron. The protein is Ferritin heavy chain (FTH1) of Equus caballus (Horse).